The following is a 434-amino-acid chain: CC-adding tRNA nucleotidyltransferase (434 aa).

Residue 19-22 (GAVR) coordinates CTP. Mg(2+) contacts are provided by D32 and D34. CTP-binding positions include 90 to 91 (RD), N95, 130 to 139 (DHLRSLRGVR), and R175.

The protein belongs to the tRNA nucleotidyltransferase/poly(A) polymerase family. Mg(2+) is required as a cofactor.

It catalyses the reaction a tRNA precursor + 2 CTP = a tRNA with a 3' CC end + 2 diphosphate. In terms of biological role, tRNA nucleotidyltransferase involved in the synthesis of the tRNA CCA terminus. Adds the two cytidine residues to tRNA. This chain is CC-adding tRNA nucleotidyltransferase, found in Thermus thermophilus (strain ATCC BAA-163 / DSM 7039 / HB27).